Consider the following 66-residue polypeptide: Small ribosomal subunit protein bS21 (66 aa).

Belongs to the bacterial ribosomal protein bS21 family.

This is Small ribosomal subunit protein bS21 from Rickettsia akari (strain Hartford).